Here is a 361-residue protein sequence, read N- to C-terminus: Protein RecA (361 aa).

Gly77–Thr84 serves as a coordination point for ATP.

This sequence belongs to the RecA family.

Its subcellular location is the cytoplasm. Functionally, can catalyze the hydrolysis of ATP in the presence of single-stranded DNA, the ATP-dependent uptake of single-stranded DNA by duplex DNA, and the ATP-dependent hybridization of homologous single-stranded DNAs. It interacts with LexA causing its activation and leading to its autocatalytic cleavage. This is Protein RecA from Brucella suis (strain ATCC 23445 / NCTC 10510).